Here is a 214-residue protein sequence, read N- to C-terminus: Cytochrome b (214 aa).

The next 4 membrane-spanning stretches (helical) occupy residues 31–51 (FGSM…FLAI), 75–96 (WIMQ…YTHI), 111–131 (WLSG…GYVL), and 176–196 (FFAL…IHIL). Positions 81 and 95 each coordinate heme b. H180 and H194 together coordinate heme b. H199 lines the a ubiquinone pocket.

The protein belongs to the cytochrome b family. In terms of assembly, the cytochrome bc1 complex contains 3 respiratory subunits (MT-CYB, CYC1 and UQCRFS1), 2 core proteins (UQCRC1 and UQCRC2) and probably 6 low-molecular weight proteins. Heme b is required as a cofactor.

The protein resides in the mitochondrion inner membrane. In terms of biological role, component of the ubiquinol-cytochrome c reductase complex (complex III or cytochrome b-c1 complex) that is part of the mitochondrial respiratory chain. The b-c1 complex mediates electron transfer from ubiquinol to cytochrome c. Contributes to the generation of a proton gradient across the mitochondrial membrane that is then used for ATP synthesis. In Lachesis muta muta (Bushmaster), this protein is Cytochrome b (MT-CYB).